We begin with the raw amino-acid sequence, 340 residues long: Nuclear transcription factor Y subunit A-3 (340 aa).

Residues 43-116 form a disordered region; it reads SLSLKVDSRP…KGFASNPKQG (74 aa). A compositionally biased stretch (low complexity) spans 60–77; sequence QISFQDQDSSSTQSTGQS. Polar residues predominate over residues 78–103; it reads YTEVASSGDDNPSRQISFSAKSGSEI. The short motif at 182–205 is the Subunit association domain (SAD) element; it reads FVNAKQYHAIMRRRQQRAKLEAQN. The NFYA/HAP2-type DNA-binding region spans 212–237; that stretch reads KPYLHESRHVHALKRPRGSGGRFLNT.

Belongs to the NFYA/HAP2 subunit family. As to quaternary structure, heterotrimeric transcription factor composed of three components, NF-YA, NF-YB and NF-YC. NF-YB and NF-YC must interact and dimerize for NF-YA association and DNA binding. In terms of tissue distribution, ubiquitous.

The protein resides in the nucleus. Its function is as follows. Stimulates the transcription of various genes by recognizing and binding to a CCAAT motif in promoters. In Arabidopsis thaliana (Mouse-ear cress), this protein is Nuclear transcription factor Y subunit A-3 (NFYA3).